We begin with the raw amino-acid sequence, 187 residues long: Adenylate kinase (187 aa).

ATP is bound at residue 12-17; it reads GAGKGT. Positions 32–61 are NMP; the sequence is STGDIFRANLAENTELGQKARQFMDAGDLV. AMP contacts are provided by residues T33, R38, 59 to 61, 87 to 90, and Q94; these read DLV and GYPR. The interval 128–134 is LID; it reads GRGRADD. R129 contributes to the ATP binding site. AMP is bound by residues R131 and R142. Residue R170 participates in ATP binding.

This sequence belongs to the adenylate kinase family. In terms of assembly, monomer.

It localises to the cytoplasm. It catalyses the reaction AMP + ATP = 2 ADP. The protein operates within purine metabolism; AMP biosynthesis via salvage pathway; AMP from ADP: step 1/1. In terms of biological role, catalyzes the reversible transfer of the terminal phosphate group between ATP and AMP. Plays an important role in cellular energy homeostasis and in adenine nucleotide metabolism. The chain is Adenylate kinase from Leuconostoc mesenteroides subsp. mesenteroides (strain ATCC 8293 / DSM 20343 / BCRC 11652 / CCM 1803 / JCM 6124 / NCDO 523 / NBRC 100496 / NCIMB 8023 / NCTC 12954 / NRRL B-1118 / 37Y).